A 145-amino-acid chain; its full sequence is D-aminoacyl-tRNA deacylase (145 aa).

The short motif at Gly137–Pro138 is the Gly-cisPro motif, important for rejection of L-amino acids element.

This sequence belongs to the DTD family. In terms of assembly, homodimer.

Its subcellular location is the cytoplasm. It carries out the reaction glycyl-tRNA(Ala) + H2O = tRNA(Ala) + glycine + H(+). It catalyses the reaction a D-aminoacyl-tRNA + H2O = a tRNA + a D-alpha-amino acid + H(+). An aminoacyl-tRNA editing enzyme that deacylates mischarged D-aminoacyl-tRNAs. Also deacylates mischarged glycyl-tRNA(Ala), protecting cells against glycine mischarging by AlaRS. Acts via tRNA-based rather than protein-based catalysis; rejects L-amino acids rather than detecting D-amino acids in the active site. By recycling D-aminoacyl-tRNA to D-amino acids and free tRNA molecules, this enzyme counteracts the toxicity associated with the formation of D-aminoacyl-tRNA entities in vivo and helps enforce protein L-homochirality. This Shewanella piezotolerans (strain WP3 / JCM 13877) protein is D-aminoacyl-tRNA deacylase.